A 550-amino-acid chain; its full sequence is MDSQRNLLVIALLFVSFMIWQTWEQDKAPKPQVQQTTQTTTTAAGSAASQGVPASGQGKLITVKTDVLSLTINTRGGDIEQALLLAYPKELGSSEPFQLLETTPNFVYQAQSGLTGRNGPDNPNNNKGRPLYNTERDTYVLADGQDELVIPMTFTDEAGNAFTKTFALKRGQYAVYVGYDVKNAGTQPLEISSFGQLKQTIDLPSHRDTGSSNFALHTFRGAAYSTPDEKYEKYKFDTIADDENLNVNAKGGWVAMLQQYFATAWVPASNVTSNFYTADLGHGVAAIGYKSEPVQVQPGQTAKLASTLWVGPEIQDKMAQVAPHLDLTVDYGWLWFISQPLFKLLKWIHSFLGNWGFSIIAITFIVRGVMYPLTKAQYTSMAKMRLLQPKIQAMRERLGDDKQRMSQEMMALYKAEKVNPLGGCFPLLIQMPIFLALYYMLMGSVELRHAPFALWIHDLSAQDPYYILPILMGATMFFIQKMSPTTVTDPMQQKIMTFMPVIFTVFFLWFPSGLVLYYIVSNLVTILQQQLIYRGLEKRGLHSREKKKKA.

Residues 6–26 (NLLVIALLFVSFMIWQTWEQD) traverse the membrane as a helical segment. Disordered stretches follow at residues 28–54 (APKP…GVPA) and 111–132 (QSGL…RPLY). Residues 30–52 (KPQVQQTTQTTTTAAGSAASQGV) show a composition bias toward low complexity. Polar residues predominate over residues 111-127 (QSGLTGRNGPDNPNNNK). 4 helical membrane-spanning segments follow: residues 346–366 (KWIH…TFIV), 421–441 (LGGC…YYML), 459–479 (LSAQ…MFFI), and 500–520 (PVIF…YYIV).

It belongs to the OXA1/ALB3/YidC family. Type 1 subfamily. As to quaternary structure, interacts with the Sec translocase complex via SecD. Specifically interacts with transmembrane segments of nascent integral membrane proteins during membrane integration.

Its subcellular location is the cell inner membrane. Its function is as follows. Required for the insertion and/or proper folding and/or complex formation of integral membrane proteins into the membrane. Involved in integration of membrane proteins that insert both dependently and independently of the Sec translocase complex, as well as at least some lipoproteins. Aids folding of multispanning membrane proteins. The chain is Membrane protein insertase YidC from Cronobacter sakazakii (strain ATCC BAA-894) (Enterobacter sakazakii).